We begin with the raw amino-acid sequence, 209 residues long: Orotate phosphoribosyltransferase (209 aa).

5-phospho-alpha-D-ribose 1-diphosphate-binding positions include arginine 96, lysine 100, histidine 102, and 122-130 (EDLISTGGS). An orotate-binding site is contributed by serine 126.

It belongs to the purine/pyrimidine phosphoribosyltransferase family. PyrE subfamily. As to quaternary structure, homodimer. The cofactor is Mg(2+).

It catalyses the reaction orotidine 5'-phosphate + diphosphate = orotate + 5-phospho-alpha-D-ribose 1-diphosphate. Its pathway is pyrimidine metabolism; UMP biosynthesis via de novo pathway; UMP from orotate: step 1/2. In terms of biological role, catalyzes the transfer of a ribosyl phosphate group from 5-phosphoribose 1-diphosphate to orotate, leading to the formation of orotidine monophosphate (OMP). This chain is Orotate phosphoribosyltransferase, found in Streptococcus pyogenes serotype M2 (strain MGAS10270).